We begin with the raw amino-acid sequence, 212 residues long: Uracil phosphoribosyltransferase (212 aa).

5-phospho-alpha-D-ribose 1-diphosphate contacts are provided by residues arginine 78, arginine 103, and 130 to 138 (DPMLATGGS). Uracil-binding positions include isoleucine 193 and 198-200 (GDA). Aspartate 199 contacts 5-phospho-alpha-D-ribose 1-diphosphate.

The protein belongs to the UPRTase family. It depends on Mg(2+) as a cofactor.

It catalyses the reaction UMP + diphosphate = 5-phospho-alpha-D-ribose 1-diphosphate + uracil. Its pathway is pyrimidine metabolism; UMP biosynthesis via salvage pathway; UMP from uracil: step 1/1. With respect to regulation, allosterically activated by GTP. Catalyzes the conversion of uracil and 5-phospho-alpha-D-ribose 1-diphosphate (PRPP) to UMP and diphosphate. In Azotobacter vinelandii (strain DJ / ATCC BAA-1303), this protein is Uracil phosphoribosyltransferase.